The following is a 698-amino-acid chain: MMELITELFDEDTTLPITNLNPKKKIPQIFSVHVDDAIEQPGFRLCTYTSGGDTNRDLKMGDKMMHIVPFTLTAKGSIAKLKGLGPSPINYINSVFTVAMQTMRQYKIDACMLRILKSKTAGQARQIQVIADRLIRSRSGGRYVLLKELWDYDKKYAYILIHRKNVSLEDIPGVPEISTELFTKVESKVGDVYINKDTGAQVTKNEAIAASIAQENDKRSDQAVIVKVKISRRAIAQSQSLESSRFESELFQKYESTAANFNKPATAPLIPEAEEMKLGINSLASKTKAAKIIAEGTANELHYDYKFFSKSEVNEVSEKIKDVILNAIKNEPTTSIKCLEKYAAAVNQFFEEYKDNWLDKHNKTRKGQPDEVWGEITKNAWNAAKTKFLKRMIYSFSGIGAGPMIDITIARDGSKYTPSQKRGIREYCGSGYTDINNLLLGRYNPERYDVMSEKEIESAINNLDSAFENGDRIPEGITVYRAQSMTAPIYEALVKNKVFYFRNFVSTSLTPIIFGRFGITHAGIGLLEPEARNELTVDKNEEGITINPNEIRAYKENPEYVKVQIGWAIDGAHKVNVVYPGSLGIATEAEVILPRGLMVKVNKITDASNNDGTTSNNTKLIQAEVMTTEELTESVIYDGDCLMETGEVVAMTGDIEIEDRVDFASFVSSNVKQKVESSLGIIASCIDITNMPYKFVQG.

The TR mART core domain occupies 375-628 (EITKNAWNAA…KLIQAEVMTT (254 aa)). Catalysis depends on residues Arg481, Ser506, and Glu590.

The protein belongs to the Tevenvirinae NAD(+)--arginine ADP-ribosyltransferase family. Proteolytic cleavages at the N- and C-termini by the prohead core protein protease give rise to the mature enzyme.

The protein localises to the virion. It carries out the reaction L-arginyl-[protein] + NAD(+) = N(omega)-(ADP-D-ribosyl)-L-arginyl-[protein] + nicotinamide + H(+). ADP-ribosyltransferase that efficiently ADP-ribosylates one of the two alpha subunits of host RNA polymerase RPOA on an arginine located in the C-terminal region. ADP-ribosylation of RPOA alpha subunit enhances the transcription of viral early genes. Also ribosylates RPOA subunits beta, beta' and sigma 70 and performs an autoribosylation reaction. In Escherichia coli (Bacteriophage T6), this protein is NAD(+)--arginine ADP-ribosyltransferase (alt).